The sequence spans 349 residues: Holliday junction branch migration complex subunit RuvB (349 aa).

The interval 1-183 is large ATPase domain (RuvB-L); the sequence is MTDPSRLVTP…FGIPIRLNFY (183 aa). ATP is bound by residues Leu-22, Arg-23, Gly-64, Lys-67, Thr-68, Thr-69, 130-132, Arg-173, Tyr-183, and Arg-220; that span reads EDF. Residue Thr-68 coordinates Mg(2+). The segment at 184–254 is small ATPAse domain (RuvB-S); that stretch reads TIEELESIVT…IADHALGALE (71 aa). The interval 257-349 is head domain (RuvB-H); the sequence is SAGLDAMDRR…GLFGDTGDQE (93 aa). Residues Arg-293, Arg-312, and Arg-317 each contribute to the DNA site.

It belongs to the RuvB family. Homohexamer. Forms an RuvA(8)-RuvB(12)-Holliday junction (HJ) complex. HJ DNA is sandwiched between 2 RuvA tetramers; dsDNA enters through RuvA and exits via RuvB. An RuvB hexamer assembles on each DNA strand where it exits the tetramer. Each RuvB hexamer is contacted by two RuvA subunits (via domain III) on 2 adjacent RuvB subunits; this complex drives branch migration. In the full resolvosome a probable DNA-RuvA(4)-RuvB(12)-RuvC(2) complex forms which resolves the HJ.

It is found in the cytoplasm. It carries out the reaction ATP + H2O = ADP + phosphate + H(+). In terms of biological role, the RuvA-RuvB-RuvC complex processes Holliday junction (HJ) DNA during genetic recombination and DNA repair, while the RuvA-RuvB complex plays an important role in the rescue of blocked DNA replication forks via replication fork reversal (RFR). RuvA specifically binds to HJ cruciform DNA, conferring on it an open structure. The RuvB hexamer acts as an ATP-dependent pump, pulling dsDNA into and through the RuvAB complex. RuvB forms 2 homohexamers on either side of HJ DNA bound by 1 or 2 RuvA tetramers; 4 subunits per hexamer contact DNA at a time. Coordinated motions by a converter formed by DNA-disengaged RuvB subunits stimulates ATP hydrolysis and nucleotide exchange. Immobilization of the converter enables RuvB to convert the ATP-contained energy into a lever motion, pulling 2 nucleotides of DNA out of the RuvA tetramer per ATP hydrolyzed, thus driving DNA branch migration. The RuvB motors rotate together with the DNA substrate, which together with the progressing nucleotide cycle form the mechanistic basis for DNA recombination by continuous HJ branch migration. Branch migration allows RuvC to scan DNA until it finds its consensus sequence, where it cleaves and resolves cruciform DNA. This chain is Holliday junction branch migration complex subunit RuvB, found in Rhodopseudomonas palustris (strain ATCC BAA-98 / CGA009).